Consider the following 653-residue polypeptide: MNDVTTETYETLKQSVLHTFAQLTGYNVSELSLTSHLENDLGVDSIALAEIAVSLSRQFQLNTPLLIQDINTIKDALDGILQREFQLSEKVEPAAIALSGDADLWLGNLVRQIFASHSGYDVNALALDAEIESDLGIDSVSVASAQGELFNTLQLNSETIIANCNTLSALKQCLAARLVQEKGQDWFEQRGRGQSDSAIDHDADTTAEVTPPTATPVAINAEIGDPRTMRDFVGIEHPDIFHKAREFHLFYQDKKKRQLYFYGMPLETPCKNRAVMFDEATGQHREFLMFGSNSYLGLSNHPEIIHAIQDAASLYGATNTGCRIIAGSNVLHLELERKLAKLKGRDDCIVYPSGYSANLGCISALTSRHDLVFTDAINHMSIQDGCKLAGAQRKIYNHSLTSLEKSLAKYADHPGGKLIVTDGVFSMHGDIVDLPRLMKLAERYGARVLVDDAHSTGVLGKTGAGTSEHFNMKGQVDLELGTMSKALSGLGGYVCGDGDVVEYLRFYSNSYVFAATIPAPVAAGVIASIDVMLREPERLAKLWDNIYYFRTRLLNAGFDLENSDSAIIPIVVGDDAKTLFFGRAVRARGMFCQTVVFPGVSVGDARLRISITSEHTREDLDEAYAILVASALEVGVPVNASAHQEENASVAEA.

The region spanning 7 to 84 (ETYETLKQSV…DALDGILQRE (78 aa)) is the Carrier domain. O-(pantetheine 4'-phosphoryl)serine is present on Ser45. 354 to 355 (GY) is a binding site for pyridoxal 5'-phosphate. Residue His379 participates in substrate binding. Pyridoxal 5'-phosphate-binding residues include Ser426, His454, and Thr482. N6-(pyridoxal phosphate)lysine is present on Lys485. Residues 512-532 (VFAATIPAPVAAGVIASIDVM) form a helical membrane-spanning segment.

Requires pyridoxal 5'-phosphate as cofactor.

Its subcellular location is the membrane. It functions in the pathway antibiotic biosynthesis; prodigiosin biosynthesis. Functionally, involved in the biosynthesis of 4-methoxy-2,2'-bipyrrole-5-carbaldehyde (MBC), one of the terminal products involved in the biosynthesis of the red antibiotic prodigiosin (Pig). Carrier of the L-malonyl group (malonyl-S-PigH), which is decarboxylated by PigJ to yield a C2 carbanion acetyl-S-PigH. Then the pyrrolyl group of pyrrolyl-S-cysteinyl PigJ intermediate is captured by the C2 carbanion acetyl-S-PigH to yield the pyrrolyl-beta-ketoacyl-S-PigH. In the last step, PigH catalyzes the decarboxylative condensation between the pyrrolyl-beta-ketoacyl (pyrrolyl-beta-ketoacyl-S-PigH) and L-serine to yield 4-hydroxy-2,2'-bipyrrole-5-methanol (HBM). This Serratia sp. (strain ATCC 39006) (Prodigiosinella confusarubida) protein is 4-hydroxy-2,2'-bipyrrole-5-methanol synthase PigH.